We begin with the raw amino-acid sequence, 133 residues long: Exonuclease VapC9 (133 aa).

In terms of domain architecture, PINc spans 5-113 (YLVDASALYA…LVLVTQDREL (109 aa)). Mg(2+) is bound by residues Asp8, Asp92, and Asp110.

It belongs to the PINc/VapC protein family. In terms of assembly, homodimer, 2 of which then form a homotetramer. Requires Mg(2+) as cofactor.

Inhibited by EDTA. Functionally, toxic component of a type II toxin-antitoxin (TA) system. Its function is as follows. Has ribonuclease activity. Has a slow ssDNA exonuclease activity. This is Exonuclease VapC9 from Pyrobaculum aerophilum (strain ATCC 51768 / DSM 7523 / JCM 9630 / CIP 104966 / NBRC 100827 / IM2).